Reading from the N-terminus, the 508-residue chain is Aspartic proteinase A3 (508 aa).

The first 25 residues, 1-25 (MGTRFQSFLLVFLLSCLILISTASC), serve as a signal peptide directing secretion. Positions 26 to 69 (ERNGDGTIRIGLKKRKLDRSNRLASQLFLKNRGSHWSPKHYFRL) are cleaved as a propeptide — activation peptide. The 419-residue stretch at 87–505 (YYGDITIGTP…DYGKGRVGFA (419 aa)) folds into the Peptidase A1 domain. D105 is an active-site residue. 2 disulfide bridges follow: C118–C124 and C283–C287. The active site involves D292. A Saposin B-type domain is found at 317–419 (IVSRECKAVV…AELCDHIPTQ (103 aa)). 4 disulfides stabilise this stretch: C322-C413, C347-C385, C353-C382, and C427-C464. N-linked (GlcNAc...) asparagine glycosylation is present at N399.

The protein belongs to the peptidase A1 family. Expressed in petals, carpels and seed pods.

The protein localises to the secreted. Involved in the processing and degradation of storage proteins. This Arabidopsis thaliana (Mouse-ear cress) protein is Aspartic proteinase A3 (APA3).